The primary structure comprises 287 residues: Bifunctional protein FolD (287 aa).

NADP(+) is bound by residues Gly-168–Ser-170, Ser-193, and Ile-234.

The protein belongs to the tetrahydrofolate dehydrogenase/cyclohydrolase family. As to quaternary structure, homodimer.

The catalysed reaction is (6R)-5,10-methylene-5,6,7,8-tetrahydrofolate + NADP(+) = (6R)-5,10-methenyltetrahydrofolate + NADPH. It catalyses the reaction (6R)-5,10-methenyltetrahydrofolate + H2O = (6R)-10-formyltetrahydrofolate + H(+). It participates in one-carbon metabolism; tetrahydrofolate interconversion. Functionally, catalyzes the oxidation of 5,10-methylenetetrahydrofolate to 5,10-methenyltetrahydrofolate and then the hydrolysis of 5,10-methenyltetrahydrofolate to 10-formyltetrahydrofolate. This is Bifunctional protein FolD from Clostridioides difficile (strain 630) (Peptoclostridium difficile).